The following is a 395-amino-acid chain: Capsid protein (395 aa).

Over residues 1–41 the composition is skewed to basic residues; that stretch reads MARKYAKRSKSRPRTARRSPKSRSRPRSRAPRRKAPSRPRI. Residues 1–51 are disordered; that stretch reads MARKYAKRSKSRPRTARRSPKSRSRPRSRAPRRKAPSRPRIQRVNPVRRPM. The short motif at 2-9 is the Nuclear localization signal element; the sequence is ARKYAKRS.

It is found in the host nucleus. The protein resides in the virion. Its function is as follows. Self-assembles to form the virion icosahedral capsid. In Chaetoceros setoense (Chaetoceros setoense DNA virus), this protein is Capsid protein.